We begin with the raw amino-acid sequence, 42 residues long: Photosystem I reaction center subunit IX (42 aa).

Residues 7-27 (YLSVAPVLATLWFGSLAGLLI) form a helical membrane-spanning segment.

This sequence belongs to the PsaJ family.

The protein localises to the plastid. It localises to the chloroplast thylakoid membrane. Its function is as follows. May help in the organization of the PsaE and PsaF subunits. This Chloranthus spicatus (Chulantree) protein is Photosystem I reaction center subunit IX.